Consider the following 448-residue polypeptide: Binary larvicide subunit BinB (448 aa).

A beta-trefoil domain region spans residues 1-198; it reads MCDSKDNSGV…TAFVNSSFYA (198 aa). A disulfide bond links cysteine 67 and cysteine 161. A probable pore-forming domain region spans residues 199-448; sequence AAIPQLPQTS…NEELIPKINQ (250 aa).

Belongs to the toxin_10 family. In terms of assembly, forms a heterodimer with BinA. Upon toxin crystal solubilization with NaOH at pH 12, only the 63-kDa (binB) and 43-kDa (binA) proteins were detected. Interacts with mosquito protein Cpm1 which acts as its host receptor. In terms of processing, processed by proteases extracted from C.pipiens larval gut; unlike its partner BinA, it does not form a stable digestion product.

Its subcellular location is the spore. It localises to the perispore. Its function is as follows. Component of a binary toxin active against Culex and some Aedes mosquito larvae. This subunit alone has no toxic larvicidal activity. This subunit is responsible for localized binding to specific regions of the host larval gut. Binary toxin internalization into host gut cells requires both proteins. This is Binary larvicide subunit BinB (binB) from Lysinibacillus sphaericus (Bacillus sphaericus).